The primary structure comprises 202 residues: MTSTVGTLGTAITSRVHSLNRPNMVSVGTVVWLSSELMFFAGLFAMYFTARAQAGGKWPPSTELNLYQAVPVTLVLIASSFTCQMGVFSAERGDVFGLRRWYVITLLMGLFFVLGQGYEYYHLITHGTTIPSSAYGSVFYLATGFHGLHVTGGLIAFIFLLARTTMSKFTPAQATASIVVSYYWHFVDIVWIALFTVIYFIR.

The next 5 membrane-spanning stretches (helical) occupy residues 30-50 (VVWL…YFTA), 69-89 (AVPV…GVFS), 101-121 (WYVI…YEYY), 141-161 (LATG…IFLL), and 178-198 (IVVS…FTVI).

This sequence belongs to the cytochrome c oxidase subunit 3 family.

It is found in the cell membrane. It catalyses the reaction 4 Fe(II)-[cytochrome c] + O2 + 8 H(+)(in) = 4 Fe(III)-[cytochrome c] + 2 H2O + 4 H(+)(out). The polypeptide is Probable cytochrome c oxidase subunit 3 (ctaE) (Mycobacterium leprae (strain TN)).